The sequence spans 211 residues: Holliday junction branch migration complex subunit RuvA (211 aa).

A domain I region spans residues 1–64 (MIGRLRGMLV…EDAQLLYGFA (64 aa)). The domain II stretch occupies residues 65–143 (NKVERKLFRL…DWQAQQIHLV (79 aa)). Residues 144–162 (SDDGVIPEQLSAELSQETT) are flexible linker. Residues 163 to 211 (FVNDNKGDAINALLSLGYKQVQADKAVKSVYNRGMSSENIIRDALKSMI) are domain III.

The protein belongs to the RuvA family. In terms of assembly, homotetramer. Forms an RuvA(8)-RuvB(12)-Holliday junction (HJ) complex. HJ DNA is sandwiched between 2 RuvA tetramers; dsDNA enters through RuvA and exits via RuvB. An RuvB hexamer assembles on each DNA strand where it exits the tetramer. Each RuvB hexamer is contacted by two RuvA subunits (via domain III) on 2 adjacent RuvB subunits; this complex drives branch migration. In the full resolvosome a probable DNA-RuvA(4)-RuvB(12)-RuvC(2) complex forms which resolves the HJ.

The protein resides in the cytoplasm. In terms of biological role, the RuvA-RuvB-RuvC complex processes Holliday junction (HJ) DNA during genetic recombination and DNA repair, while the RuvA-RuvB complex plays an important role in the rescue of blocked DNA replication forks via replication fork reversal (RFR). RuvA specifically binds to HJ cruciform DNA, conferring on it an open structure. The RuvB hexamer acts as an ATP-dependent pump, pulling dsDNA into and through the RuvAB complex. HJ branch migration allows RuvC to scan DNA until it finds its consensus sequence, where it cleaves and resolves the cruciform DNA. The polypeptide is Holliday junction branch migration complex subunit RuvA (Colwellia psychrerythraea (strain 34H / ATCC BAA-681) (Vibrio psychroerythus)).